A 67-amino-acid polypeptide reads, in one-letter code: Large ribosomal subunit protein bL35 (67 aa).

The protein belongs to the bacterial ribosomal protein bL35 family.

The polypeptide is Large ribosomal subunit protein bL35 (Dehalococcoides mccartyi (strain ATCC BAA-2266 / KCTC 15142 / 195) (Dehalococcoides ethenogenes (strain 195))).